The primary structure comprises 285 residues: uncharacterized protein (285 aa).

Residues 197-217 form a helical membrane-spanning segment; sequence PTIGALLSLVSAFFSFIPFLM.

It is found in the membrane. This is an uncharacterized protein from Saccharomyces cerevisiae (strain ATCC 204508 / S288c) (Baker's yeast).